The primary structure comprises 882 residues: DNA mismatch repair protein MutS (882 aa).

627-634 (GPNMAGKS) contributes to the ATP binding site.

It belongs to the DNA mismatch repair MutS family.

In terms of biological role, this protein is involved in the repair of mismatches in DNA. It is possible that it carries out the mismatch recognition step. This protein has a weak ATPase activity. The chain is DNA mismatch repair protein MutS from Anaeromyxobacter sp. (strain K).